The primary structure comprises 364 residues: Ribosomal RNA large subunit methyltransferase F (364 aa).

The tract at residues 1-52 (MPKPAIKTAAKLAMSSAGKRGKPSTPKSLAKPQTTKPKTASKLKAKHGEQKR) is disordered. Residues 25–38 (TPKSLAKPQTTKPK) are compositionally biased toward polar residues.

Belongs to the methyltransferase superfamily. METTL16/RlmF family.

The protein resides in the cytoplasm. It catalyses the reaction adenosine(1618) in 23S rRNA + S-adenosyl-L-methionine = N(6)-methyladenosine(1618) in 23S rRNA + S-adenosyl-L-homocysteine + H(+). Its function is as follows. Specifically methylates the adenine in position 1618 of 23S rRNA. This Shewanella sp. (strain ANA-3) protein is Ribosomal RNA large subunit methyltransferase F.